The following is an 887-amino-acid chain: Alanine--tRNA ligase (887 aa).

Zn(2+) contacts are provided by histidine 563, histidine 567, cysteine 677, and histidine 681.

The protein belongs to the class-II aminoacyl-tRNA synthetase family. It depends on Zn(2+) as a cofactor.

Its subcellular location is the cytoplasm. It catalyses the reaction tRNA(Ala) + L-alanine + ATP = L-alanyl-tRNA(Ala) + AMP + diphosphate. In terms of biological role, catalyzes the attachment of alanine to tRNA(Ala) in a two-step reaction: alanine is first activated by ATP to form Ala-AMP and then transferred to the acceptor end of tRNA(Ala). Also edits incorrectly charged Ser-tRNA(Ala) and Gly-tRNA(Ala) via its editing domain. This is Alanine--tRNA ligase from Dinoroseobacter shibae (strain DSM 16493 / NCIMB 14021 / DFL 12).